The chain runs to 928 residues: Diacylglycerol kinase zeta (928 aa).

Positions 1–14 (MEPRDGSPEARSSD) are enriched in basic and acidic residues. Disordered stretches follow at residues 1 to 46 (MEPR…RRFP) and 59 to 82 (KSGL…SERQ). Low complexity predominate over residues 15–24 (SESASASSSG). Residues 25–37 (SERDAGPEPDKAP) are compositionally biased toward basic and acidic residues. 2 Phorbol-ester/DAG-type zinc fingers span residues 98–152 (HIWF…NFRC) and 172–230 (HHWV…EEPC). Positions 251–280 (PQNTLKASKKKKRASFKRKSSKKGPEEGRW) are disordered. Positions 257–272 (ASKKKKRASFKRKSSK) are enriched in basic residues. Residues 259–273 (KKKKRASFKRKSSKK) form an MARCKS homology region. A mediates interaction with RASGRP1 region spans residues 278 to 416 (GRWRPFIIRP…HVEEGNVVQL (139 aa)). In terms of domain architecture, DAGKc spans 291 to 425 (PLMKPLLVFV…LDRWDLHAEP (135 aa)). Positions 361–369 (LSTLDQLRL) match the Nuclear export signal motif. Ser705 is subject to Phosphoserine. The disordered stretch occupies residues 759–788 (ARPDLPTPTSPLPTSPCSPTPRSLQGDAAP). The span at 763–777 (LPTPTSPLPTSPCSP) shows a compositional bias: pro residues. Ser781 carries the phosphoserine modification. 2 ANK repeats span residues 822–852 (QSRT…EILD) and 857–886 (NGET…SLMK). The PDZ-binding signature appears at 924-928 (QETAV).

This sequence belongs to the eukaryotic diacylglycerol kinase family. In terms of assembly, interacts (via PDZ-binding motif) with the PDZ domain of the syntrophin SNTG1 and that of SNX27. Interacts with IRS1 in the absence of insulin; insulin stimulation decreases this interaction. Found in a ternary complex with IRS1 and PIP5K1A in the absence of insulin. Interacts with PIP5K1A. As to quaternary structure, forms a signaling complex with RASGRP1 and HRAS. Phosphorylation of the MARCKS homology domain by PKC reduces nuclear accumulation of DGK-zeta. In terms of tissue distribution, highest levels in brain, and substantial levels in skeletal muscle, heart, and pancreas. As to expression, predominantly expressed in muscle.

It is found in the nucleus. The protein resides in the cytoplasm. It localises to the cytosol. Its subcellular location is the cell membrane. The protein localises to the cell projection. It is found in the lamellipodium. It catalyses the reaction a 1,2-diacyl-sn-glycerol + ATP = a 1,2-diacyl-sn-glycero-3-phosphate + ADP + H(+). The catalysed reaction is a 1-O-alkyl-sn-glycerol + ATP = a 1-O-alkyl-sn-glycero-3-phosphate + ADP + H(+). The enzyme catalyses 1-O-alkyl-2-acyl-sn-glycerol + ATP = 1-O-alkyl-2-acyl-sn-glycero-3-phosphate + ADP + H(+). It carries out the reaction 1,2-didecanoyl-sn-glycerol + ATP = 1,2-didecanoyl-sn-glycero-3-phosphate + ADP + H(+). It catalyses the reaction 1,2-ditetradecanoyl-sn-glycerol + ATP = 1,2-ditetradecanoyl-sn-glycero-3-phosphate + ADP + H(+). The catalysed reaction is 1-hexadecanoyl-2-(9Z-octadecenoyl)-sn-glycerol + ATP = 1-hexadecanoyl-2-(9Z-octadecenoyl)-sn-glycero-3-phosphate + ADP + H(+). The enzyme catalyses 1-hexadecanoyl-2-(5Z,8Z,11Z,14Z-eicosatetraenoyl)-sn-glycerol + ATP = 1-hexadecanoyl-2-(5Z,8Z,11Z,14Z-eicosatetraenoyl)-sn-glycero-3-phosphate + ADP + H(+). It carries out the reaction 1-octadecanoyl-2-(9Z-octadecenoyl)-sn-glycerol + ATP = 1-octadecanoyl-2-(9Z-octadecenoyl)-sn-glycero-3-phosphate + ADP + H(+). It catalyses the reaction 1-octadecanoyl-2-(5Z,8Z,11Z,14Z-eicosatetraenoyl)-sn-glycerol + ATP = 1-octadecanoyl-2-(5Z,8Z,11Z,14Z-eicosatetraenoyl)-sn-glycero-3-phosphate + ADP + H(+). The catalysed reaction is 1-octadecanoyl-2-(4Z,7Z,10Z,13Z,16Z,19Z-docosahexaenoyl)-sn-glycerol + ATP = 1-octadecanoyl-2-(4Z,7Z,10Z,13Z,16Z,19Z-docosahexaenoyl)-sn-glycero-3-phosphate + ADP + H(+). The enzyme catalyses 1,2-di-(9Z-octadecenoyl)-sn-glycerol + ATP = 1,2-di-(9Z-octadecenoyl)-sn-glycero-3-phosphate + ADP + H(+). It carries out the reaction 1-(9Z-octadecenoyl)-2-hexadecanoyl-sn-glycerol + ATP = 1-(9Z)-octadecenoyl-2-hexadecanoyl-sn-glycero-3-phosphate + ADP + H(+). It catalyses the reaction 1-eicosanoyl-2-(5Z,8Z,11Z,14Z)-eicosatetraenoyl-sn-glycerol + ATP = 1-eicosanoyl-2-(5Z,8Z,11Z,14Z)-eicosatetraenoyl-sn-glycero-3-phosphate + ADP + H(+). The catalysed reaction is 1,2-di-(5Z,8Z,11Z,14Z)-eicosatetraenoyl-sn-glycerol + ATP = 1,2-di-(5Z,8Z,11Z,14Z)-eicosatetraenoyl-sn-glycero-3-phosphate + ADP + H(+). The enzyme catalyses 1-O-hexadecyl-2-acetyl-sn-glycerol + ATP = 1-O-hexadecyl-2-acetyl-sn-glycero-3-phosphate + ADP + H(+). It carries out the reaction 1-O-hexadecyl-2-(5Z,8Z,11Z,14Z-eicosatetraenoyl)-sn-glycerol + ATP = 1-O-hexadecyl-2-(5Z,8Z,11Z,14Z-eicosatetraenoyl)-sn-glycero-3-phosphate + ADP + H(+). It catalyses the reaction 1-O-hexadecyl-2-(9Z-octadecenoyl)-sn-glycerol + ATP = 1-O-hexadecyl-2-(9Z-octadecenoyl)-sn-glycero-3-phosphate + ADP + H(+). The catalysed reaction is 1-O-hexadecyl-sn-glycerol + ATP = 1-O-hexadecyl-sn-glycero-3-phosphate + ADP + H(+). It functions in the pathway lipid metabolism; glycerolipid metabolism. Activated by 1,2-diacyl-sn-glycero-3-phosphate/phosphatidic acid irrespective of its acyl chain composition. Its function is as follows. Diacylglycerol kinase that converts diacylglycerol/DAG into phosphatidic acid/phosphatidate/PA and regulates the respective levels of these two bioactive lipids. Thereby, acts as a central switch between the signaling pathways activated by these second messengers with different cellular targets and opposite effects in numerous biological processes. Also plays an important role in the biosynthesis of complex lipids. Does not exhibit an acyl chain-dependent substrate specificity among diacylglycerol species. Can also phosphorylate 1-alkyl-2-acylglycerol in vitro but less efficiently and with a preference for alkylacylglycerols containing an arachidonoyl group. The biological processes it is involved in include T cell activation since it negatively regulates T-cell receptor signaling which is in part mediated by diacylglycerol. By generating phosphatidic acid, stimulates PIP5KIA activity which regulates actin polymerization. Through the same mechanism could also positively regulate insulin-induced translocation of SLC2A4 to the cell membrane. In terms of biological role, regulates RASGRP1 activity. Does not regulate RASGRP1 activity. In Homo sapiens (Human), this protein is Diacylglycerol kinase zeta.